A 117-amino-acid polypeptide reads, in one-letter code: MKTIIAIFSLAAMIVLVRPTPLENDEWTRSIINVPCKKCYKKDSNGVCRKIFGCQEKRNIIDPPCRKCYKKDSNNKCVRIAGCGNEAVKRAIINPQGCARCHKPDPNGKCRKIHGCS.

An N-terminal signal peptide occupies residues 1-23 (MKTIIAIFSLAAMIVLVRPTPLE). 3 tandem repeats follow at residues 28–56 (TRSI…GCQE), 57–88 (KRNI…NEAV), and 89–117 (KRAI…HGCS). The 3 X approximate tandem repeats stretch occupies residues 29 to 117 (RSIINVPCKK…GKCRKIHGCS (89 aa)).

Contains 6 disulfide bonds. As to expression, expressed outside of acontia.

It localises to the secreted. The protein resides in the nematocyst. Functionally, putative neurotoxin. This Calliactis polypus (Hermit crab anemone) protein is Structural toxin peptide sea anemone type 9a.